The sequence spans 71 residues: Small ribosomal subunit protein bS21 (71 aa).

The protein belongs to the bacterial ribosomal protein bS21 family.

The polypeptide is Small ribosomal subunit protein bS21 (Buchnera aphidicola subsp. Baizongia pistaciae (strain Bp)).